A 362-amino-acid polypeptide reads, in one-letter code: Dihydroorotate dehydrogenase (quinone) (362 aa).

Residues alanine 62–lysine 66 and threonine 86 contribute to the FMN site. Lysine 66 is a substrate binding site. Substrate is bound at residue asparagine 111–phenylalanine 115. Asparagine 139 and asparagine 170 together coordinate FMN. Residue asparagine 170 coordinates substrate. Serine 173 acts as the Nucleophile in catalysis. Asparagine 175 is a binding site for substrate. Residues lysine 215 and serine 243 each coordinate FMN. Asparagine 244 to threonine 245 contacts substrate. FMN is bound by residues glycine 266, glycine 295, and tyrosine 316–serine 317.

It belongs to the dihydroorotate dehydrogenase family. Type 2 subfamily. Monomer. Requires FMN as cofactor.

It localises to the cell membrane. The enzyme catalyses (S)-dihydroorotate + a quinone = orotate + a quinol. The protein operates within pyrimidine metabolism; UMP biosynthesis via de novo pathway; orotate from (S)-dihydroorotate (quinone route): step 1/1. Functionally, catalyzes the conversion of dihydroorotate to orotate with quinone as electron acceptor. In Rhizobium rhizogenes (strain K84 / ATCC BAA-868) (Agrobacterium radiobacter), this protein is Dihydroorotate dehydrogenase (quinone).